Reading from the N-terminus, the 481-residue chain is UDP-N-acetylmuramate--L-alanine ligase (481 aa).

115–121 (GTHGKTT) provides a ligand contact to ATP.

This sequence belongs to the MurCDEF family.

The protein resides in the cytoplasm. The enzyme catalyses UDP-N-acetyl-alpha-D-muramate + L-alanine + ATP = UDP-N-acetyl-alpha-D-muramoyl-L-alanine + ADP + phosphate + H(+). Its pathway is cell wall biogenesis; peptidoglycan biosynthesis. Functionally, cell wall formation. In Granulibacter bethesdensis (strain ATCC BAA-1260 / CGDNIH1), this protein is UDP-N-acetylmuramate--L-alanine ligase.